The primary structure comprises 836 residues: Zinc fingers and homeoboxes protein 2 (836 aa).

The interval 1–61 is disordered; sequence MASKRKSTTP…EHSSKETEVV (61 aa). A compositionally biased stretch (polar residues) spans 8–19; it reads TTPCMVRTSQVL. Residues 27–77 form an interaction with EFNB1 region; it reads ADRAKDKGAGMPQSDVTKDSWAAEPEHSSKETEVVEVKSMGENLSKKLQGG. Positions 50–61 are enriched in basic and acidic residues; sequence EPEHSSKETEVV. K64 participates in a covalent cross-link: Glycyl lysine isopeptide (Lys-Gly) (interchain with G-Cter in SUMO2). 2 consecutive C2H2-type zinc fingers follow at residues 78–101 and 110–133; these read YECK…DMQH and YVCA…SKFH. The tract at residues 164 to 214 is disordered; it reads PITASGPGSSDNDPGVSVGKTPMTKTGKLKADAKKVPKKPDEAAPENHMEG. Positions 192-214 are enriched in basic and acidic residues; that stretch reads LKADAKKVPKKPDEAAPENHMEG. The interval 195–358 is required for homodimerization; it reads DAKKVPKKPD…PAQLTPTKVS (164 aa). 4 DNA-binding regions (homeobox) span residues 263 to 324, 439 to 501, 530 to 591, and 628 to 690; these read NTTK…WSPE, TPAS…IVHI, PQKF…EQAV, and SPSS…TLSW. Positions 263–446 are required for repressor activity; sequence NTTKYNSALD…PLTPASDRKK (184 aa). A required for interaction with NFYA region spans residues 263–497; the sequence is NTTKYNSALD…SDHRYRCQRG (235 aa). Positions 317-446 are required for nuclear localization; that stretch reads HGISWSPEEV…PLTPASDRKK (130 aa). A disordered region spans residues 404–442; it reads GQKRPLVTPQAAPEPKRPHIAQVPEPPPKVANTPLTPAS. K455 is covalently cross-linked (Glycyl lysine isopeptide (Lys-Gly) (interchain with G-Cter in SUMO2)). 3 stretches are compositionally biased toward basic and acidic residues: residues 699–709, 730–746, and 813–824; these read MSDDRGRDAVS, YAKD…EKLV, and RVAEGTVERADS. The interval 699-836 is disordered; it reads MSDDRGRDAV…DSTPAEAGQA (138 aa). S824 and S826 each carry phosphoserine.

This sequence belongs to the ZHX family. In terms of assembly, homodimer (via homeobox domain 1). Heterodimer with ZHX1 (via homeobox domain 1). Heterodimer with ZHX3 (via homeobox domain 1). Heterodimerization with ZHX1 is not necessary for repressor activity. Interacts (via homeobox domain) with NFYA (via N-terminus). Interacts with EFNB1 intracellular domain peptide; the interaction enhances ZHX2 transcriptional repression activity. In terms of tissue distribution, expressed in retina where it localizes to Muller glial cells of the inner nuclear layer (at protein level). Detected in heart, brain, spleen, lung, liver, skeletal muscle, kidney and testis.

Its subcellular location is the nucleus. Acts as a transcriptional repressor. Represses the promoter activity of the CDC25C gene stimulated by NFYA. May play a role in retinal development where it regulates the composition of bipolar cell populations, by promoting differentiation of bipolar OFF-type cells. In the brain, may promote maintenance and suppress differentiation of neural progenitor cells in the developing cortex. The chain is Zinc fingers and homeoboxes protein 2 (Zhx2) from Mus musculus (Mouse).